The chain runs to 393 residues: Staphopain B (393 aa).

Residues 1–36 (MNSSCKTRVFNIISIIMVSMLILSLGAFANNNKAKA) form the signal peptide. Residues 37–219 (DSHSKQLEIN…KVEENEAIQE (183 aa)) constitute a propeptide that is removed on maturation. Active-site residues include Cys243, His340, and Asn360.

This sequence belongs to the peptidase C47 family. As to quaternary structure, in the cytoplasm, prematurely activated/folded SspB forms a stable non-covalent complex with SspC. In terms of processing, proteolytically cleaved by staphylococcal serine protease (SspA).

It localises to the secreted. Prematurely activated/folded staphopain B is inhibited by staphostatin B (SspC), which is probably required to protect staphylococcal cytoplasmic proteins from degradation by SspB. Cysteine protease that plays an important role in the inhibition of host innate immune response. Degrades host elastin, fibrogen, fibronectin and kininogen. Blocks phagocytosis of opsonised S.aureus by neutrophils and monocytes by inducing their death in a proteolytic activity-dependent manner. Decreases surface expression of the 'don't eat me' signal CD31 on neutrophils. Cleaves host galectin-3/LGALS3, thereby inhibiting the neutrophil-activating ability of the lectin. The chain is Staphopain B (sspB) from Staphylococcus aureus.